Consider the following 260-residue polypeptide: Thiamine thiazole synthase (260 aa).

NAD(+)-binding positions include alanine 36, 55 to 56, glycine 63, and 154 to 156; these read EQ and HVD. Fe cation is bound by residues aspartate 156 and histidine 171. Methionine 224 serves as a coordination point for NAD(+). Arginine 234 serves as a coordination point for glycine.

It belongs to the THI4 family. Homooctamer; tetramer of dimers. Requires Fe(2+) as cofactor.

The enzyme catalyses hydrogen sulfide + glycine + NAD(+) = ADP-5-ethyl-4-methylthiazole-2-carboxylate + nicotinamide + 3 H2O + H(+). It participates in cofactor biosynthesis; thiamine diphosphate biosynthesis. Functionally, involved in the biosynthesis of the thiazole moiety of thiamine. Catalyzes the conversion of NAD and glycine to adenosine diphosphate 5-(2-hydroxyethyl)-4-methylthiazole-2-carboxylate (ADT), an adenylated thiazole intermediate, using free sulfide as a source of sulfur. The polypeptide is Thiamine thiazole synthase (Methanosarcina barkeri (strain Fusaro / DSM 804)).